The sequence spans 1884 residues: Fatty acid synthase subunit alpha (1884 aa).

Residues 91–141 (TPDPAEPPAAEEPKAETGKESAPAASAAAAAATQPAAAVAPPPQSAGPVES) are disordered. Low complexity predominate over residues 111 to 129 (SAPAASAAAAAATQPAAAV). Residues 147 to 222 (VKASLLIHVL…EQFQDTFSGS (76 aa)) enclose the Carrier domain. S182 carries the post-translational modification O-(pantetheine 4'-phosphoryl)serine. The disordered stretch occupies residues 583 to 613 (TEQTTQDALAIPTGSNTPTEEDELSTASDDD). Over residues 584–600 (EQTTQDALAIPTGSNTP) the composition is skewed to polar residues. Positions 601-613 (TEEDELSTASDDD) are enriched in acidic residues. The beta-ketoacyl reductase stretch occupies residues 677–873 (DKYVLVTGAG…CGAIIGWTRG (197 aa)). The 541-residue stretch at 1120–1660 (IQEVVIQHDL…QKGAQAVVVH (541 aa)) folds into the Ketosynthase family 3 (KS3) domain. Active-site for beta-ketoacyl synthase activity residues include C1303, H1545, and H1586. Mg(2+)-binding residues include D1770, V1771, and E1772. Residues 1770–1772 (DVE), Y1796, S1806, 1815–1825 (EATFKALGVSS), 1839–1842 (RDGN), and 1869–1871 (ISH) each bind acetyl-CoA. Mg(2+) is bound by residues S1870 and H1871.

It belongs to the thiolase-like superfamily. Fungal fatty acid synthetase subunit alpha family. Fatty acid synthase is composed of alpha and beta subunits.

The catalysed reaction is acetyl-CoA + n malonyl-CoA + 2n NADPH + 4n H(+) = a long-chain-acyl-CoA + n CoA + n CO2 + 2n NADP(+).. The enzyme catalyses a fatty acyl-[ACP] + malonyl-[ACP] + H(+) = a 3-oxoacyl-[ACP] + holo-[ACP] + CO2. It carries out the reaction a (3R)-hydroxyacyl-[ACP] + NADP(+) = a 3-oxoacyl-[ACP] + NADPH + H(+). Its function is as follows. Fatty acid synthetase catalyzes the formation of long-chain fatty acids from acetyl-CoA, malonyl-CoA and NADPH. The alpha subunit contains domains for: acyl carrier protein, 3-oxoacyl-[acyl-carrier-protein] reductase, and 3-oxoacyl-[acyl-carrier-protein] synthase. The protein is Fatty acid synthase subunit alpha (FAS2) of Candida parapsilosis (strain CDC 317 / ATCC MYA-4646) (Yeast).